A 290-amino-acid chain; its full sequence is uncharacterized protein (290 aa).

Residues 2-238 (LKTENLSVGY…EIVNELYDLK (237 aa)) form the ABC transporter domain. An ATP-binding site is contributed by 34–41 (GPNGAGKS).

This sequence belongs to the ABC transporter superfamily.

This is an uncharacterized protein from Methanocaldococcus jannaschii (strain ATCC 43067 / DSM 2661 / JAL-1 / JCM 10045 / NBRC 100440) (Methanococcus jannaschii).